The sequence spans 473 residues: MQALQSSSLRASPPNPLRLPSNRQSHQLITNARPLRRQQRSFISASASTVSAPKRETDPKKRVVITGMGLVSVFGNDVDAYYEKLLSGESGISLIDRFDASKFPTRFGGQIRGFSSEGYIDGKNERRLDDCLKYCIVAGKKALESANLGGDKLNTIDKRKAGVLVGTGMGGLTVFSEGVQNLIEKGHRRISPFFIPYAITNMGSALLAIDLGLMGPNYSISTACATSNYCFYAAANHIRRGEADMMIAGGTEAAIIPIGLGGFVACRALSQRNDDPQTASRPWDKARDGFVMGEGAGVLVMESLEHAMKRGAPIVAEYLGGAVNCDAHHMTDPRADGLGVSSCIERCLEDAGVSPEEVNYINAHATSTLAGDLAEINAIKKVFKSTSGIKINATKSMIGHCLGAAGGLEAIATVKAINTGWLHPSINQFNPEQAVDFDTVPNEKKQHEVDVAISNSFGFGGHNSVVAFSAFKP.

Positions 1–10 (MQALQSSSLR) are enriched in polar residues. The tract at residues 1 to 26 (MQALQSSSLRASPPNPLRLPSNRQSH) is disordered. The N-terminal 46 residues, 1 to 46 (MQALQSSSLRASPPNPLRLPSNRQSHQLITNARPLRRQQRSFISAS), are a transit peptide targeting the chloroplast. Positions 60 to 470 (KKRVVITGMG…GHNSVVAFSA (411 aa)) constitute a Ketosynthase family 3 (KS3) domain. Catalysis depends on for beta-ketoacyl synthase activity residues Cys-224, His-364, and His-400.

It belongs to the thiolase-like superfamily. Beta-ketoacyl-ACP synthases family. Homodimer.

The protein localises to the plastid. It is found in the chloroplast stroma. The enzyme catalyses a fatty acyl-[ACP] + malonyl-[ACP] + H(+) = a 3-oxoacyl-[ACP] + holo-[ACP] + CO2. In terms of biological role, catalyzes the condensation reaction of fatty acid synthesis by the addition to an acyl acceptor of two carbons from malonyl-ACP. Specific for elongation from C-10 to unsaturated C-16 and C-18 fatty acids. The protein is 3-oxoacyl-[acyl-carrier-protein] synthase I, chloroplastic (KAS1) of Arabidopsis thaliana (Mouse-ear cress).